Here is a 265-residue protein sequence, read N- to C-terminus: MSDIIIAFILGIVEGLAEFLPISSTGHLILVGHLLGFEGERAKTFEIVIQLGAILAIAILYHKRLVSLCNIKPLLRKEKKFNAFHVFLGVFPAVVAGLLLHDVIKTYLFQPYTVVIGLVAGAILMIFAEVKKQEATSYSLDDLTYRQALTIGLFQCLAVYPGFSRAGSTISGGLLAKVNYKTASEFSFLIALPVMVGATGLDLLKSWTYLSVDDIPMFAVGFITSFIVAMLAVVTFLKLLEKIGLKPFAYYRILLAILFTVFVLL.

7 helical membrane passes run 4–24 (IIIAFILGIVEGLAEFLPISS), 42–62 (AKTFEIVIQLGAILAIAILYH), 84–104 (FHVFLGVFPAVVAGLLLHDVI), 108–128 (LFQPYTVVIGLVAGAILMIFA), 184–204 (SEFSFLIALPVMVGATGLDLL), 217–237 (MFAVGFITSFIVAMLAVVTFL), and 245–265 (LKPFAYYRILLAILFTVFVLL).

It belongs to the UppP family.

The protein resides in the cell membrane. It catalyses the reaction di-trans,octa-cis-undecaprenyl diphosphate + H2O = di-trans,octa-cis-undecaprenyl phosphate + phosphate + H(+). Functionally, catalyzes the dephosphorylation of undecaprenyl diphosphate (UPP). Confers resistance to bacitracin. The protein is Undecaprenyl-diphosphatase 1 of Bacillus thuringiensis (strain Al Hakam).